The chain runs to 125 residues: Histone H1-like protein Hc1 (125 aa).

A disordered region spans residues 98–125; that stretch reads TKAKVKPTKKAAPKTKVKTAKKTRSTKK. The span at 100-125 shows a compositional bias: basic residues; sequence AKVKPTKKAAPKTKVKTAKKTRSTKK.

This sequence belongs to the histone H1/H5 family. HCT subfamily.

Functionally, might have a role analogous to that of eukaryotic histone proteins. The chain is Histone H1-like protein Hc1 (hctA) from Chlamydia trachomatis serovar D (strain ATCC VR-885 / DSM 19411 / UW-3/Cx).